The sequence spans 236 residues: Putative (5-formylfuran-3-yl)methyl phosphate synthase (236 aa).

The Schiff-base intermediate with substrate role is filled by Lys38. Lys94 acts as the Proton acceptor in catalysis.

This sequence belongs to the MfnB family.

The catalysed reaction is 2 D-glyceraldehyde 3-phosphate = 4-(hydroxymethyl)-2-furancarboxaldehyde phosphate + phosphate + 2 H2O. Functionally, catalyzes the formation of 4-(hydroxymethyl)-2-furancarboxaldehyde phosphate (4-HFC-P) from two molecules of glyceraldehyde-3-P (GA-3-P). This chain is Putative (5-formylfuran-3-yl)methyl phosphate synthase, found in Methylorubrum extorquens (Methylobacterium dichloromethanicum).